The chain runs to 391 residues: NADH-quinone oxidoreductase subunit D (391 aa).

It belongs to the complex I 49 kDa subunit family. In terms of assembly, NDH-1 is composed of 14 different subunits. Subunits NuoB, C, D, E, F, and G constitute the peripheral sector of the complex.

The protein localises to the cell inner membrane. The catalysed reaction is a quinone + NADH + 5 H(+)(in) = a quinol + NAD(+) + 4 H(+)(out). NDH-1 shuttles electrons from NADH, via FMN and iron-sulfur (Fe-S) centers, to quinones in the respiratory chain. The immediate electron acceptor for the enzyme in this species is believed to be ubiquinone. Couples the redox reaction to proton translocation (for every two electrons transferred, four hydrogen ions are translocated across the cytoplasmic membrane), and thus conserves the redox energy in a proton gradient. The protein is NADH-quinone oxidoreductase subunit D of Rickettsia felis (strain ATCC VR-1525 / URRWXCal2) (Rickettsia azadi).